The following is a 438-amino-acid chain: MFLPQEFIRQKRNRQALDRDGIAAFVRGVTDGSVTEGQVAAFAMAVYFNDLSTDERVALTLAQRDSGDVLDWHALELDGPVIDKHSTGGVGDVVSLMLGPMVAACGGYVPMISGRGLGHTGGTLDKLSAIPGYNVTPDTDAFRRAVRDVGVAIIGQTARLAPADMRIYAIRDVTATVESVAMITASILSKKLAAGLDGLVMDVKVGSGAFMPTAEQSAELARSIVDVGNGAGMKTTAILTDMNQSLAPCAGNALEVACAIDYLTGKSRPARLHDVTMALSAELLVTGGLAHDVADARAKLLRALDSGAAAERFARMVTALGGPADLIDAPARHLARAKVVVPVPARASGVVQRVDCRALGLAVVALGGGRTRAADAIDYSVGLTALAEIGQRVEADQPLGYVHARDAAAAAHAVDTIQRSYVLGEAGDAPPTIYQQIG.

It belongs to the thymidine/pyrimidine-nucleoside phosphorylase family. As to quaternary structure, homodimer.

It carries out the reaction thymidine + phosphate = 2-deoxy-alpha-D-ribose 1-phosphate + thymine. It functions in the pathway pyrimidine metabolism; dTMP biosynthesis via salvage pathway; dTMP from thymine: step 1/2. The enzymes which catalyze the reversible phosphorolysis of pyrimidine nucleosides are involved in the degradation of these compounds and in their utilization as carbon and energy sources, or in the rescue of pyrimidine bases for nucleotide synthesis. This Burkholderia lata (strain ATCC 17760 / DSM 23089 / LMG 22485 / NCIMB 9086 / R18194 / 383) protein is Thymidine phosphorylase.